A 154-amino-acid polypeptide reads, in one-letter code: 3-hydroxyacyl-[acyl-carrier-protein] dehydratase FabZ (154 aa).

The active site involves His-57.

It belongs to the thioester dehydratase family. FabZ subfamily.

The protein localises to the cytoplasm. It catalyses the reaction a (3R)-hydroxyacyl-[ACP] = a (2E)-enoyl-[ACP] + H2O. Involved in unsaturated fatty acids biosynthesis. Catalyzes the dehydration of short chain beta-hydroxyacyl-ACPs and long chain saturated and unsaturated beta-hydroxyacyl-ACPs. The chain is 3-hydroxyacyl-[acyl-carrier-protein] dehydratase FabZ from Sinorhizobium medicae (strain WSM419) (Ensifer medicae).